The sequence spans 255 residues: 28.1 kDa virulence protein (255 aa).

This sequence belongs to the SpvA family.

Functionally, not known. This protein is involved in the virulence of salmonellas. This chain is 28.1 kDa virulence protein (mkaB), found in Salmonella typhimurium.